Here is a 187-residue protein sequence, read N- to C-terminus: Large ribosomal subunit protein mL49 (187 aa).

This sequence belongs to the mitochondrion-specific ribosomal protein mL49 family.

The protein resides in the mitochondrion. The polypeptide is Large ribosomal subunit protein mL49 (mrpl-49) (Caenorhabditis elegans).